The primary structure comprises 871 residues: MADTIKHTPMMQQYLAVKADYPNQLLFYRMGDFYELFYEDAVKASELLEITLTARGKSGGNPIPMAGIPHHSAEGYLAKLVKLGQSVAICEQIGDPSISKGPVERKVVRVITPGTLVEDALLEDKSENLLAAIFQQADEYGLATLDVASGRFEATLLPDSTQLSAEVERLKPAEIILPDDPLFKQNLPESIQNRPGLVDYPSWHFEKDSCRKRLIDHFGTQDLVAFGCDQLPAVISAAGVILHYAQSMLQNTLAHVFSLQTYQADDALALDAMSRRNLELDTNLTGGKNHTLFAILDNATTAMGSRLMNRWLNQPLRNRDIINDRFNAIEDIIEQHSQEEFRSALKPIGDLERILSRVSLYSARPRDILHLGRSLNQLPELQALLKQQTANKWQQLSKQLGLYPELASQLETALVESPPMLMRDGGVFAEGYDSELDELRNLKNQAGDYLLALEAREKERTGITTLKVGYNRVHGYYIEVSKLQSDNVPADYVRRQTLKAQERYITPELKEFEDKVLSANEKALAREKWLYQQLLERLNQDLQALQRTAAALAETDVLVSLARQAINLNLTRPTLSSEPGIDIKQGRHLTVEALSNQPFIPNDTCFDEQRRLQIITGPNMGGKSTFMRQTALIAIMAYMGSFVPAESATLGPIDRIFTRIGASDDLTSGRSTFMVEMTETANILHHASPESLILMDEVGRGTSTFDGLALAWAIAEQMAQSIQGYCLFATHYFELTTLVEQFNNTVNIHLSAIEHQDKIVFMHQVEEGPASQSYGLQVAALAGVPTAVIDKAKKHLHRLENQTAAQQQTSGTASSAKESVQQFDLFAQPALPEAIETMLTDLKALSVDDLTPRQALEKLYEVTNTVKNASE.

617–624 contributes to the ATP binding site; sequence GPNMGGKS.

This sequence belongs to the DNA mismatch repair MutS family.

Functionally, this protein is involved in the repair of mismatches in DNA. It is possible that it carries out the mismatch recognition step. This protein has a weak ATPase activity. The chain is DNA mismatch repair protein MutS from Hydrogenovibrio crunogenus (strain DSM 25203 / XCL-2) (Thiomicrospira crunogena).